We begin with the raw amino-acid sequence, 292 residues long: UPF0696 protein C11orf68 homolog (292 aa).

A compositionally biased stretch (low complexity) spans 1–10 (MAAAAAAVAG). The tract at residues 1–60 (MAAAAAAVAGAGRGGGGGADPGQERSRARSWVGAERSEGRRMEPNEELEEEDSPGGREDG) is disordered. A compositionally biased stretch (gly residues) spans 11–20 (AGRGGGGGAD). Basic and acidic residues predominate over residues 35–44 (ERSEGRRMEP).

The protein belongs to the UPF0696 family.

The chain is UPF0696 protein C11orf68 homolog (Bles03) from Rattus norvegicus (Rat).